Reading from the N-terminus, the 593-residue chain is Proteasome-associated ATPase (593 aa).

The stretch at 23-95 (LLSQISYLEE…LKEEVDRLGQ (73 aa)) forms a coiled coil. Residue 282–287 (GCGKTL) participates in ATP binding. The interval 592–593 (YL) is docks into pockets in the proteasome alpha-ring.

Belongs to the AAA ATPase family. Homohexamer. Assembles into a hexameric ring structure that caps the 20S proteasome core. Strongly interacts with the prokaryotic ubiquitin-like protein Pup through a hydrophobic interface; the interacting region of ARC lies in its N-terminal coiled-coil domain. There is one Pup binding site per ARC hexamer ring. Upon ATP-binding, the C-terminus of ARC interacts with the alpha-rings of the proteasome core, possibly by binding to the intersubunit pockets.

It functions in the pathway protein degradation; proteasomal Pup-dependent pathway. In terms of biological role, ATPase which is responsible for recognizing, binding, unfolding and translocation of pupylated proteins into the bacterial 20S proteasome core particle. May be essential for opening the gate of the 20S proteasome via an interaction with its C-terminus, thereby allowing substrate entry and access to the site of proteolysis. Thus, the C-termini of the proteasomal ATPase may function like a 'key in a lock' to induce gate opening and therefore regulate proteolysis. This is Proteasome-associated ATPase from Geodermatophilus obscurus (strain ATCC 25078 / DSM 43160 / JCM 3152 / CCUG 61914 / KCC A-0152 / KCTC 9177 / NBRC 13315 / NRRL B-3577 / G-20).